Here is a 456-residue protein sequence, read N- to C-terminus: Asparagine--tRNA ligase (456 aa).

The protein belongs to the class-II aminoacyl-tRNA synthetase family. As to quaternary structure, homodimer.

Its subcellular location is the cytoplasm. The catalysed reaction is tRNA(Asn) + L-asparagine + ATP = L-asparaginyl-tRNA(Asn) + AMP + diphosphate + H(+). In Mycoplasmoides gallisepticum (strain R(low / passage 15 / clone 2)) (Mycoplasma gallisepticum), this protein is Asparagine--tRNA ligase.